The sequence spans 296 residues: MNRTATRVLSSIEEVREALAGPGRVGLVPTMGYLHEGHAALIRRARAECDTVVLSVFVNPRQFGVNEDLSRYPRDLNRDLAVAEAAGADLLFHPDVATMYPAGYATTVAVGGVSEPLEGSSRPGHFDGVATVVLKLLNIVQPERAYFGEKDWQQLAVVRRMVRDLNVPVQIVGVPTVREPSGLALSSRNSYLTPEQQARAAILSRALQAVQAAAAAGERDTARLRQAGLAVLAEEPEIELDYLAVVDGDMREKAHVENDPLTRVLVAARLFGVRLIDNVPLSPAERRLSERESRNT.

31–38 (MGYLHEGH) lines the ATP pocket. Histidine 38 serves as the catalytic Proton donor. Glutamine 62 lines the (R)-pantoate pocket. Glutamine 62 contacts beta-alanine. ATP is bound at residue 148–151 (GEKD). Glutamine 154 contributes to the (R)-pantoate binding site. ATP-binding positions include valine 177 and 185 to 188 (LSSR).

It belongs to the pantothenate synthetase family. As to quaternary structure, homodimer.

It is found in the cytoplasm. The catalysed reaction is (R)-pantoate + beta-alanine + ATP = (R)-pantothenate + AMP + diphosphate + H(+). The protein operates within cofactor biosynthesis; (R)-pantothenate biosynthesis; (R)-pantothenate from (R)-pantoate and beta-alanine: step 1/1. Catalyzes the condensation of pantoate with beta-alanine in an ATP-dependent reaction via a pantoyl-adenylate intermediate. This Deinococcus geothermalis (strain DSM 11300 / CIP 105573 / AG-3a) protein is Pantothenate synthetase.